Consider the following 123-residue polypeptide: Protein Wnt-7b (123 aa).

Serine 1 carries O-palmitoleoyl serine; by PORCN lipidation. The interval 33 to 61 (VEVVRASRLRQPTFLKIKQIRSYQKPMET) is disordered linker. Cysteine 89 and cysteine 104 are disulfide-bonded. An N-linked (GlcNAc...) asparagine glycan is attached at asparagine 90.

The protein belongs to the Wnt family. Palmitoleoylation is required for efficient binding to frizzled receptors. Depalmitoleoylation leads to Wnt signaling pathway inhibition.

The protein resides in the secreted. It is found in the extracellular space. Its subcellular location is the extracellular matrix. Ligand for members of the frizzled family of seven transmembrane receptors that functions in the canonical Wnt/beta-catenin signaling pathway. Required for normal fusion of the chorion and the allantois during placenta development. Required for central nervous system (CNS) angiogenesis and blood-brain barrier regulation. This is Protein Wnt-7b (WNT-7B) from Sceloporus occidentalis (Western fence lizard).